The primary structure comprises 122 residues: Large ribosomal subunit protein uL14 (122 aa).

It belongs to the universal ribosomal protein uL14 family. In terms of assembly, part of the 50S ribosomal subunit. Forms a cluster with proteins L3 and L19. In the 70S ribosome, L14 and L19 interact and together make contacts with the 16S rRNA in bridges B5 and B8.

In terms of biological role, binds to 23S rRNA. Forms part of two intersubunit bridges in the 70S ribosome. In Geobacter sulfurreducens (strain ATCC 51573 / DSM 12127 / PCA), this protein is Large ribosomal subunit protein uL14.